The following is a 53-amino-acid chain: Zinc metalloproteinase-disintegrin-like alborhagin (53 aa).

This sequence belongs to the venom metalloproteinase (M12B) family. P-III subfamily. P-IIIb sub-subfamily. In terms of assembly, monomer. Requires Zn(2+) as cofactor. In terms of processing, contains numerous disulfide bonds. Post-translationally, glycosylated. As to expression, expressed by the venom gland.

The protein localises to the secreted. Alborhagin-induced platelet aggregation, but not shape change, is inhibited by EDTA, suggesting that the platelet activation (shape change) is independent of divalent cation or metalloproteinase activity. Functionally, induces platelet activation and glycoprotein VI (GP6)-dependent platelet aggregation. Induces ectodomain cleavage of GP6 by activating endogenous platelet metalloproteinases (probably ADAM10). Has fibrinogenolytic activity against the alpha chain of fibrinogen (FGA). Recognizes distinct binding sites as convulxin, since alborhagin has minimal effect on convulxin binding to GPVI-expressing cells. In terms of biological role, disintegrin alborhagin-C: 42 kDa fragment of alborhagin autoproteolysed that does not show platelet activation. This is Zinc metalloproteinase-disintegrin-like alborhagin from Trimeresurus albolabris (White-lipped pit viper).